An 83-amino-acid polypeptide reads, in one-letter code: Large ribosomal subunit protein bL31 (83 aa).

The protein belongs to the bacterial ribosomal protein bL31 family. Type A subfamily. As to quaternary structure, part of the 50S ribosomal subunit.

In terms of biological role, binds the 23S rRNA. The sequence is that of Large ribosomal subunit protein bL31 from Synechococcus sp. (strain CC9605).